The chain runs to 141 residues: Large ribosomal subunit protein uL11 (141 aa).

Belongs to the universal ribosomal protein uL11 family. Part of the ribosomal stalk of the 50S ribosomal subunit. Interacts with L10 and the large rRNA to form the base of the stalk. L10 forms an elongated spine to which L12 dimers bind in a sequential fashion forming a multimeric L10(L12)X complex. Post-translationally, one or more lysine residues are methylated.

Its function is as follows. Forms part of the ribosomal stalk which helps the ribosome interact with GTP-bound translation factors. The chain is Large ribosomal subunit protein uL11 from Synechococcus sp. (strain ATCC 27144 / PCC 6301 / SAUG 1402/1) (Anacystis nidulans).